Consider the following 421-residue polypeptide: EGFR adapter protein (421 aa).

4 disordered regions span residues 18 to 94 (TFIS…PQLQ), 109 to 154 (DVQE…RLVD), 173 to 194 (EDSRPLMHSTCGSSLTSGSGCG), and 372 to 396 (PVPLTLPRPPSTRSQRSQGAYAGGT). Residues 21–30 (SSSSASSSSS) show a composition bias toward low complexity. The span at 62–89 (FFHHHHPPAHPHPPRQQPHPHSHSHPHP) shows a compositional bias: basic residues. The span at 109 to 120 (DVQELSGQEHPH) shows a compositional bias: basic and acidic residues. Low complexity predominate over residues 181 to 194 (STCGSSLTSGSGCG). The 94-residue stretch at 286–379 (WFQAGIPREI…LLPVPLTLPR (94 aa)) folds into the SH2 domain.

May interact (via SH2 domain) with Egfr (when phosphorylated). As to expression, detected along the wing margin, with high levels of expression in two stripes of cells on either side of the dorsal/ventral boundary and lower levels of expression in a small region at the anteroposterior boundary (at protein level). High levels of expression along two parallel stripes of cells on either side of the wing pouch dorsal/ventral boundary, and slightly lower levels of expression in a region either side of the anteroposterior boundary. Also expressed in discrete regions of the wing imaginal disk outside of the pouch. Expressed in eye imaginal disk photoreceptors with highest levels of expression in R7 photoreceptor cells.

Functionally, involved in the negative regulation of the Egfr/Ras signaling pathway. During wing morphogenesis, may function redundantly with PVRAP to inhibit Egfr activity and prevent uncontrolled cell growth. In Drosophila melanogaster (Fruit fly), this protein is EGFR adapter protein.